Here is a 189-residue protein sequence, read N- to C-terminus: Interferon alpha-C (189 aa).

A signal peptide spans 1–23 (MAPAWSFRLALLLLSCNAICSLG). 2 cysteine pairs are disulfide-bonded: C24-C122 and C52-C162.

The protein belongs to the alpha/beta interferon family.

The protein localises to the secreted. Its function is as follows. Produced by macrophages, IFN-alpha have antiviral activities. Interferon stimulates the production of two enzymes: a protein kinase and an oligoadenylate synthetase. The chain is Interferon alpha-C (IFNAC) from Bos taurus (Bovine).